Reading from the N-terminus, the 205-residue chain is Protein DEPP1 (205 aa).

Polar residues-rich tracts occupy residues 55–64 (DKVTAQSRPN) and 83–101 (GDSSLCVSSLQPTLPSPGT). Residues 55 to 171 (DKVTAQSRPN…RHQTSDLKSW (117 aa)) form a disordered region. Positions 138 to 155 (MGKDTGRLCEARVPEHSL) are enriched in basic and acidic residues.

Its subcellular location is the cytoplasm. It is found in the peroxisome. It localises to the mitochondrion. Acts as a critical modulator of FOXO3-induced autophagy via increased cellular ROS. This chain is Protein DEPP1 (Depp1), found in Mus musculus (Mouse).